The following is a 474-amino-acid chain: 3-isopropylmalate dehydratase large subunit (474 aa).

Positions 353, 414, and 417 each coordinate [4Fe-4S] cluster.

Belongs to the aconitase/IPM isomerase family. LeuC type 1 subfamily. Heterodimer of LeuC and LeuD. The cofactor is [4Fe-4S] cluster.

The catalysed reaction is (2R,3S)-3-isopropylmalate = (2S)-2-isopropylmalate. It participates in amino-acid biosynthesis; L-leucine biosynthesis; L-leucine from 3-methyl-2-oxobutanoate: step 2/4. Catalyzes the isomerization between 2-isopropylmalate and 3-isopropylmalate, via the formation of 2-isopropylmaleate. The protein is 3-isopropylmalate dehydratase large subunit of Xylella fastidiosa (strain M23).